The sequence spans 391 residues: Arginine biosynthesis bifunctional protein ArgJ 2 (391 aa).

2 residues coordinate substrate: lysine 167 and serine 180. Serine 180 (nucleophile) is an active-site residue.

Belongs to the ArgJ family. Heterotetramer of two alpha and two beta chains.

The protein resides in the cytoplasm. The enzyme catalyses N(2)-acetyl-L-ornithine + L-glutamate = N-acetyl-L-glutamate + L-ornithine. It catalyses the reaction L-glutamate + acetyl-CoA = N-acetyl-L-glutamate + CoA + H(+). The protein operates within amino-acid biosynthesis; L-arginine biosynthesis; L-ornithine and N-acetyl-L-glutamate from L-glutamate and N(2)-acetyl-L-ornithine (cyclic): step 1/1. It functions in the pathway amino-acid biosynthesis; L-arginine biosynthesis; N(2)-acetyl-L-ornithine from L-glutamate: step 1/4. In terms of biological role, catalyzes two activities which are involved in the cyclic version of arginine biosynthesis: the synthesis of N-acetylglutamate from glutamate and acetyl-CoA as the acetyl donor, and of ornithine by transacetylation between N(2)-acetylornithine and glutamate. This Streptomyces clavuligerus protein is Arginine biosynthesis bifunctional protein ArgJ 2.